The primary structure comprises 430 residues: Enolase (430 aa).

Q163 serves as a coordination point for (2R)-2-phosphoglycerate. E205 (proton donor) is an active-site residue. Residues D242, E287, and D314 each coordinate Mg(2+). Positions 339, 368, 369, and 390 each coordinate (2R)-2-phosphoglycerate. K339 acts as the Proton acceptor in catalysis.

This sequence belongs to the enolase family. The cofactor is Mg(2+).

The protein resides in the cytoplasm. Its subcellular location is the secreted. It is found in the cell surface. The catalysed reaction is (2R)-2-phosphoglycerate = phosphoenolpyruvate + H2O. It participates in carbohydrate degradation; glycolysis; pyruvate from D-glyceraldehyde 3-phosphate: step 4/5. Functionally, catalyzes the reversible conversion of 2-phosphoglycerate (2-PG) into phosphoenolpyruvate (PEP). It is essential for the degradation of carbohydrates via glycolysis. The polypeptide is Enolase (Alkaliphilus metalliredigens (strain QYMF)).